The sequence spans 283 residues: E3 ubiquitin-protein ligase MARCHF5 (283 aa).

Residues 9 to 78 (VQQMLDRSCW…PQCNAEYLIV (70 aa)) form an RING-CH-type zinc finger. Positions 17, 20, 36, 38, 46, 49, 68, and 71 each coordinate Zn(2+). The next 4 helical transmembrane spans lie at 102–122 (FAAA…YGAV), 142–162 (PLFL…GKMI), 212–232 (ILCG…LMFS), and 241–261 (TILG…YFKQ).

Its subcellular location is the mitochondrion outer membrane. It is found in the endoplasmic reticulum membrane. It carries out the reaction S-ubiquitinyl-[E2 ubiquitin-conjugating enzyme]-L-cysteine + [acceptor protein]-L-lysine = [E2 ubiquitin-conjugating enzyme]-L-cysteine + N(6)-ubiquitinyl-[acceptor protein]-L-lysine.. The protein operates within protein modification; protein ubiquitination. Functionally, mitochondrial E3 ubiquitin-protein ligase that plays a crucial role in the control of mitochondrial morphology by acting as a positive regulator of mitochondrial fission. May play a role in the prevention of cell senescence acting as a regulator of mitochondrial quality control. The polypeptide is E3 ubiquitin-protein ligase MARCHF5 (marchf5) (Xenopus laevis (African clawed frog)).